The primary structure comprises 196 residues: Ribose 1,5-bisphosphate phosphokinase PhnN (196 aa).

This sequence belongs to the ribose 1,5-bisphosphokinase family.

The catalysed reaction is alpha-D-ribose 1,5-bisphosphate + ATP = 5-phospho-alpha-D-ribose 1-diphosphate + ADP. The protein operates within metabolic intermediate biosynthesis; 5-phospho-alpha-D-ribose 1-diphosphate biosynthesis; 5-phospho-alpha-D-ribose 1-diphosphate from D-ribose 5-phosphate (route II): step 3/3. Its function is as follows. Catalyzes the phosphorylation of ribose 1,5-bisphosphate to 5-phospho-D-ribosyl alpha-1-diphosphate (PRPP). The sequence is that of Ribose 1,5-bisphosphate phosphokinase PhnN from Psychromonas ingrahamii (strain DSM 17664 / CCUG 51855 / 37).